A 135-amino-acid chain; its full sequence is Putative pre-16S rRNA nuclease (135 aa).

The protein belongs to the YqgF nuclease family.

It localises to the cytoplasm. Its function is as follows. Could be a nuclease involved in processing of the 5'-end of pre-16S rRNA. This Thermus thermophilus (strain ATCC 27634 / DSM 579 / HB8) protein is Putative pre-16S rRNA nuclease.